Reading from the N-terminus, the 670-residue chain is Cyclic di-GMP phosphodiesterase PdeA (670 aa).

Positions 428–670 (QNKIFQYILK…GFLWHKPEPI (243 aa)) constitute an EAL domain.

The catalysed reaction is 3',3'-c-di-GMP + H2O = 5'-phosphoguanylyl(3'-&gt;5')guanosine + H(+). In terms of biological role, phosphodiesterase (PDE) that catalyzes the hydrolysis of cyclic diguanylate (c-di-GMP) to pGpG. This is Cyclic di-GMP phosphodiesterase PdeA from Borreliella burgdorferi (strain ATCC 35210 / DSM 4680 / CIP 102532 / B31) (Borrelia burgdorferi).